The following is a 106-amino-acid chain: Protein S40-3 (106 aa).

The disordered stretch occupies residues 1-65 (MSEEFQESEV…TEEEGEMTPP (65 aa)). The segment covering 16–41 (SFTRKDNKISHNNENYERKSTEKDKI) has biased composition (basic and acidic residues).

It belongs to the senescence regulator S40 family.

Its subcellular location is the nucleus. Functionally, regulates senescence either by modulating WRKY53 or by activating SAG12. Affects the natural variation of cyst nematodes sex ratio and susceptibility to parasitic nematodes, depending on single nucleotide polymorphism (SNPs) between cultivars. The polypeptide is Protein S40-3 (Arabidopsis thaliana (Mouse-ear cress)).